A 37-amino-acid polypeptide reads, in one-letter code: Cytochrome b6-f complex subunit 5 (37 aa).

Residues 5-25 traverse the membrane as a helical segment; sequence LLCGIVLGLIPVTLLGLFVAA.

It belongs to the PetG family. The 4 large subunits of the cytochrome b6-f complex are cytochrome b6, subunit IV (17 kDa polypeptide, PetD), cytochrome f and the Rieske protein, while the 4 small subunits are PetG, PetL, PetM and PetN. The complex functions as a dimer.

It is found in the cellular thylakoid membrane. In terms of biological role, component of the cytochrome b6-f complex, which mediates electron transfer between photosystem II (PSII) and photosystem I (PSI), cyclic electron flow around PSI, and state transitions. PetG is required for either the stability or assembly of the cytochrome b6-f complex. The polypeptide is Cytochrome b6-f complex subunit 5 (Synechococcus sp. (strain WH7803)).